A 237-amino-acid polypeptide reads, in one-letter code: Protein ULTRAPETALA 1 (237 aa).

The SAND domain maps to glutamate 18–asparagine 116. The CW-type zinc-finger motif lies at valine 133–serine 191.

In terms of assembly, interacts with HHO5. Associates with ATX1 for trimethylating 'Lys-4' on histone H3 (H3K4me3) at flower MADS box gene loci. As to expression, expressed at low levels in seedlings, roots, shoots, leaves, stems, inflorescences, pollen, flowers and siliques, with highest levels dividing tissues including inflorescence.

It is found in the cytoplasm. Its subcellular location is the nucleus. Putative transcription factor that acts as a key negative regulator of cell accumulation in shoot and floral meristems. Negatively regulates the size of the WUSCHEL (WUS)-expressing organizing center in inflorescence meristems. May act by down-regulating expression of WUS. Acts as an antirepressor that counteracts EMF1 action through modulation of trimethylated 'Lys-4' on histone H3 (H3K4me3) marks on target gene loci (including genes involved in salt stress response and flower development). Collaboratively with RBL and CYP40/SQN, influences floral meristem (FM) determinacy in an AGAMOUS and SUPERMAN-dependent manner, thus contributing to the floral developmental homeostasis. The chain is Protein ULTRAPETALA 1 from Arabidopsis thaliana (Mouse-ear cress).